A 127-amino-acid polypeptide reads, in one-letter code: MNQTVKVKKKKKTITLGVVHIRASFNNTIVTFTDIQGNTISSASAGGNGFKGARKATPYAAQVTIDRASEKAKEYGLKTISIRIGGPGAQRESAMRALFGQNFVVTSILDVSSIAHNGVRPPKRRRV.

The protein belongs to the universal ribosomal protein uS11 family. In terms of assembly, part of the 30S ribosomal subunit. Interacts with proteins S7 and S18. Binds to IF-3.

In terms of biological role, located on the platform of the 30S subunit, it bridges several disparate RNA helices of the 16S rRNA. Forms part of the Shine-Dalgarno cleft in the 70S ribosome. This chain is Small ribosomal subunit protein uS11, found in Rickettsia felis (strain ATCC VR-1525 / URRWXCal2) (Rickettsia azadi).